The following is a 430-amino-acid chain: MNFVEELRWRGMIHDIMPGTEEHLNKGMTSAYVGIDPTADSLHIGHLVGVMMLRHFQRAGHRPIALIGGATGMIGDPSMKSAERVLLDEATLRHNQDCIKQQLAKFLDFDSDAPNAAKLVNNYDWMKDYSFLGFIRDIGKHITVNYMMAKDSVKKRLSAESSTGLSFTEFSYQLLQGYDYLYLYRNEGCRLQMGGSDQWGNITTGTELIRRKDGGEAFALTCPLITKADGGKFGKTESGNIWLDPARTSPYAFYQFWLNVSDADAEKYIKIFTGLNQDEIAELASRQAEAPHLRPLQKRLAEEITVMVHSREAYDAAVEASEILFGKSTTEQLRKLDEATLLDVFAGVPQYHVERSRIATGISLVDLLADATDIFPSKGELRKTVKAGGVSLNKEKVADAEQTVGEDDLLSDRYLLAQKGKKSYYLIIVE.

An L-tyrosine-binding site is contributed by tyrosine 32. The 'HIGH' region signature appears at 37-46; it reads PTADSLHIGH. L-tyrosine contacts are provided by tyrosine 172 and glutamine 176. Residues 232–236 carry the 'KMSKS' region motif; sequence KFGKT. Residue lysine 235 coordinates ATP. The S4 RNA-binding domain maps to 362-430; the sequence is ISLVDLLADA…KKSYYLIIVE (69 aa).

The protein belongs to the class-I aminoacyl-tRNA synthetase family. TyrS type 1 subfamily. As to quaternary structure, homodimer.

Its subcellular location is the cytoplasm. The catalysed reaction is tRNA(Tyr) + L-tyrosine + ATP = L-tyrosyl-tRNA(Tyr) + AMP + diphosphate + H(+). Catalyzes the attachment of tyrosine to tRNA(Tyr) in a two-step reaction: tyrosine is first activated by ATP to form Tyr-AMP and then transferred to the acceptor end of tRNA(Tyr). The sequence is that of Tyrosine--tRNA ligase from Porphyromonas gingivalis (strain ATCC BAA-308 / W83).